The sequence spans 295 residues: Acetylglutamate kinase (295 aa).

Residues 64–65, R86, and N179 contribute to the substrate site; that span reads GG.

Belongs to the acetylglutamate kinase family. ArgB subfamily.

The protein resides in the cytoplasm. The catalysed reaction is N-acetyl-L-glutamate + ATP = N-acetyl-L-glutamyl 5-phosphate + ADP. Its pathway is amino-acid biosynthesis; L-arginine biosynthesis; N(2)-acetyl-L-ornithine from L-glutamate: step 2/4. In terms of biological role, catalyzes the ATP-dependent phosphorylation of N-acetyl-L-glutamate. The polypeptide is Acetylglutamate kinase (Thermosynechococcus vestitus (strain NIES-2133 / IAM M-273 / BP-1)).